Consider the following 233-residue polypeptide: MSLVFIIMAIAGYLVGAIPMAYLLSRWRRGIDIRRYGSGNVGASNVVKTAGKRLGLAVFIFDVSKGAVMILLSGALGLALWQQIVVGLFTIAGHNWPVFLRFNGGRGIATSLGVALVMAPVPALIALGTAIAFGLFKKMAPGVFLGVAALPFMSGYFHGFFGIREYQTISWGFIGIFLIMVTRRLMAPDNEYAHTVSKAELIFNRMFLDRDIRSRSVWINRNSAPAEESPNIL.

The next 5 membrane-spanning stretches (helical) occupy residues 3 to 23 (LVFI…MAYL), 69 to 89 (MILL…VGLF), 116 to 136 (LVMA…FGLF), 143 to 163 (VFLG…FFGI), and 168 to 188 (TISW…LMAP).

This sequence belongs to the PlsY family. Probably interacts with PlsX.

The protein localises to the cell membrane. It carries out the reaction an acyl phosphate + sn-glycerol 3-phosphate = a 1-acyl-sn-glycero-3-phosphate + phosphate. The protein operates within lipid metabolism; phospholipid metabolism. Catalyzes the transfer of an acyl group from acyl-phosphate (acyl-PO(4)) to glycerol-3-phosphate (G3P) to form lysophosphatidic acid (LPA). This enzyme utilizes acyl-phosphate as fatty acyl donor, but not acyl-CoA or acyl-ACP. The sequence is that of Glycerol-3-phosphate acyltransferase 5 from Dehalococcoides mccartyi (strain ATCC BAA-2266 / KCTC 15142 / 195) (Dehalococcoides ethenogenes (strain 195)).